We begin with the raw amino-acid sequence, 447 residues long: Elongation factor 1-alpha (447 aa).

The region spanning 5–230 (KVHINIVVIG…DNINEPKRPS (226 aa)) is the tr-type G domain. The segment at 14–21 (GHVDSGKS) is G1. A GTP-binding site is contributed by 14–21 (GHVDSGKS). An N6,N6-dimethyllysine modification is found at lysine 55. Residues 70-74 (GITID) are G2. Lysine 79 carries the post-translational modification N6,N6,N6-trimethyllysine. The G3 stretch occupies residues 91 to 94 (DAPG). Residues 91-95 (DAPGH) and 153-156 (NKMD) each bind GTP. Residues 153–156 (NKMD) are G4. Lysine 187 is modified (N6,N6,N6-trimethyllysine). The tract at residues 194 to 196 (SGF) is G5. The residue at position 261 (lysine 261) is an N6-methyllysine. Glutamate 289 is subject to 5-glutamyl glycerylphosphorylethanolamine. An N6,N6,N6-trimethyllysine modification is found at lysine 306. At glutamate 362 the chain carries 5-glutamyl glycerylphosphorylethanolamine. N6,N6,N6-trimethyllysine is present on lysine 396.

It belongs to the TRAFAC class translation factor GTPase superfamily. Classic translation factor GTPase family. EF-Tu/EF-1A subfamily.

The protein localises to the cytoplasm. Its function is as follows. This protein promotes the GTP-dependent binding of aminoacyl-tRNA to the A-site of ribosomes during protein biosynthesis. This chain is Elongation factor 1-alpha, found in Pisum sativum (Garden pea).